The following is a 420-amino-acid chain: Probable pectate lyase C (420 aa).

The first 20 residues, 1 to 20 (MKLSAPLLVSLAAFSQAVTA), serve as a signal peptide directing secretion. Residues N49, N165, and N202 are each glycosylated (N-linked (GlcNAc...) asparagine). R205 is an active-site residue. Positions 262-297 (NANFHGYVDNNYYDPDKDGQLDGSELGVSSSNYGGM) constitute an EF-hand domain. The Ca(2+) site is built by D275, D277, D279, Q281, and E286. The segment at 357 to 395 (ATMGGPGTLNGGTPAKDTDGDGIPDEAEKQLGTDPNTND) is disordered. N-linked (GlcNAc...) asparagine glycosylation occurs at N394.

This sequence belongs to the polysaccharide lyase 1 family. Ca(2+) is required as a cofactor.

It is found in the secreted. It catalyses the reaction Eliminative cleavage of (1-&gt;4)-alpha-D-galacturonan to give oligosaccharides with 4-deoxy-alpha-D-galact-4-enuronosyl groups at their non-reducing ends.. Functionally, pectinolytic enzyme consist of four classes of enzymes: pectin lyase, polygalacturonase, pectin methylesterase and rhamnogalacturonase. Among pectinolytic enzymes, pectin lyase is the most important in depolymerization of pectin, since it cleaves internal glycosidic bonds of highly methylated pectins. Favors pectate, the anion, over pectin, the methyl ester. In Neosartorya fischeri (strain ATCC 1020 / DSM 3700 / CBS 544.65 / FGSC A1164 / JCM 1740 / NRRL 181 / WB 181) (Aspergillus fischerianus), this protein is Probable pectate lyase C (plyC).